Consider the following 297-residue polypeptide: Inosose dehydratase (297 aa).

This sequence belongs to the IolE/MocC family. The cofactor is glutathione. Co(2+) serves as cofactor. Mn(2+) is required as a cofactor.

It catalyses the reaction scyllo-inosose = 3D-3,5/4-trihydroxycyclohexane-1,2-dione + H2O. It functions in the pathway polyol metabolism; myo-inositol degradation into acetyl-CoA; acetyl-CoA from myo-inositol: step 2/7. In terms of biological role, catalyzes the dehydration of inosose (2-keto-myo-inositol, 2KMI or 2,4,6/3,5-pentahydroxycyclohexanone) to 3D-(3,5/4)-trihydroxycyclohexane-1,2-dione (D-2,3-diketo-4-deoxy-epi-inositol). This is Inosose dehydratase from Clostridium perfringens (strain 13 / Type A).